The sequence spans 300 residues: Probable alpha-L-glutamate ligase (300 aa).

An ATP-grasp domain is found at 104–287 (LQLLARQGID…IAGRMIQWIE (184 aa)). Residues lysine 141, 178–179 (EY), aspartate 187, and 211–213 (RSN) contribute to the ATP site. Positions 248, 260, and 262 each coordinate Mg(2+). 3 residues coordinate Mn(2+): aspartate 248, glutamate 260, and asparagine 262.

The protein belongs to the RimK family. Mg(2+) is required as a cofactor. Requires Mn(2+) as cofactor.

This Citrobacter koseri (strain ATCC BAA-895 / CDC 4225-83 / SGSC4696) protein is Probable alpha-L-glutamate ligase.